A 343-amino-acid polypeptide reads, in one-letter code: S-adenosylmethionine:tRNA ribosyltransferase-isomerase (343 aa).

It belongs to the QueA family. As to quaternary structure, monomer.

Its subcellular location is the cytoplasm. It catalyses the reaction 7-aminomethyl-7-carbaguanosine(34) in tRNA + S-adenosyl-L-methionine = epoxyqueuosine(34) in tRNA + adenine + L-methionine + 2 H(+). It functions in the pathway tRNA modification; tRNA-queuosine biosynthesis. Functionally, transfers and isomerizes the ribose moiety from AdoMet to the 7-aminomethyl group of 7-deazaguanine (preQ1-tRNA) to give epoxyqueuosine (oQ-tRNA). This is S-adenosylmethionine:tRNA ribosyltransferase-isomerase from Borreliella burgdorferi (strain ATCC 35210 / DSM 4680 / CIP 102532 / B31) (Borrelia burgdorferi).